A 62-amino-acid polypeptide reads, in one-letter code: Alpha-conotoxin-like S1.1 (62 aa).

A signal peptide spans 1–21; sequence MGMRMMFTVFLLVVLAITVVS. Residues 22–48 constitute a propeptide that is removed on maturation; that stretch reads FPLDRESDGANAEARTHDHEKHALDRN. Cystine bridges form between Cys-50–Cys-56 and Cys-51–Cys-61. Residue Cys-61 is modified to Cysteine amide.

The protein belongs to the conotoxin A superfamily. Expressed by the venom duct.

Its subcellular location is the secreted. In terms of biological role, alpha-conotoxins act on postsynaptic membranes, they bind to the nicotinic acetylcholine receptors (nAChR) and thus inhibit them. The chain is Alpha-conotoxin-like S1.1 from Conus striatus (Striated cone).